Reading from the N-terminus, the 494-residue chain is Cytochrome P450 2A7 (494 aa).

C439 lines the heme pocket.

The protein belongs to the cytochrome P450 family. Heme serves as cofactor.

The protein resides in the endoplasmic reticulum membrane. It is found in the microsome membrane. It carries out the reaction an organic molecule + reduced [NADPH--hemoprotein reductase] + O2 = an alcohol + oxidized [NADPH--hemoprotein reductase] + H2O + H(+). Functionally, cytochromes P450 are a group of heme-thiolate monooxygenases. In liver microsomes, this enzyme is involved in an NADPH-dependent electron transport pathway. It oxidizes a variety of structurally unrelated compounds, including steroids, fatty acids, and xenobiotics. This Homo sapiens (Human) protein is Cytochrome P450 2A7 (CYP2A7).